A 155-amino-acid chain; its full sequence is Microsomal glutathione S-transferase 1 (155 aa).

The Lumenal segment spans residues 3–9 (DLKQLMD). A helical membrane pass occupies residues 10-33 (NEVLMAFTSYATIILAKMMFLSSA). The Cytoplasmic portion of the chain corresponds to 34-62 (TAFQRLTNKVFANPEDCAGFGKGENAKKF). Residue Arg-38 participates in glutathione binding. Lys-42, Lys-55, and Lys-60 each carry N6-acetyllysine. The chain crosses the membrane as a helical span at residues 63–96 (LRTDEKVERVRRAHLNDLENIVPFLGIGLLYSLS). Residues Arg-73, Arg-74, His-76, and Glu-81 each contribute to the glutathione site. The residue at position 93 (Tyr-93) is a 3'-nitrotyrosine; in vitro. Topologically, residues 97 to 99 (GPD) are lumenal. Residues 100 to 123 (LSTALIHFRIFVGARIYHTIAYLT) traverse the membrane as a helical segment. Tyr-121 is a binding site for glutathione. The Cytoplasmic portion of the chain corresponds to 124–128 (PLPQP). The helical transmembrane segment at 129-148 (NRGLAFFVGYGVTLSMAYRL) threads the bilayer. Residues 149–155 (LRSRLYL) lie on the Lumenal side of the membrane.

Belongs to the MAPEG family. In terms of assembly, homotrimer; The trimer binds only one molecule of glutathione. In vitro, peroxynitrite induces nitration at Tyr-93 which activates the enzyme. Highest in the liver, followed by kidney and testis and much lower in seminal vesicles, spleen, lung and brain.

The protein resides in the endoplasmic reticulum membrane. The protein localises to the mitochondrion outer membrane. The catalysed reaction is RX + glutathione = an S-substituted glutathione + a halide anion + H(+). In vitro, can be activated by reagents that attack Cys-50 sulfhydryl, such as N-ethylmaleimide and via nitration of Tyr-93 by peroxynitrite. In terms of biological role, conjugation of reduced glutathione to a wide number of exogenous and endogenous hydrophobic electrophiles. The protein is Microsomal glutathione S-transferase 1 (Mgst1) of Rattus norvegicus (Rat).